The following is a 425-amino-acid chain: UBX domain-containing protein 4 (425 aa).

The interval 224–257 (TPIPSLPSTPSSYQNLPSQSLTGESLPTVSNQEK) is disordered. A compositionally biased stretch (polar residues) spans 236 to 254 (YQNLPSQSLTGESLPTVSN). Ser-338 is modified (phosphoserine). The UBX domain maps to 341 to 390 (PLPSSAIVKFDFGNGKSIVHEFSKDDNIETLRAFVASHLSPEESTSFQLT).

The protein resides in the cytoplasm. It localises to the nucleus. Its function is as follows. Involved in CDC48-dependent protein degradation through the ubiquitin/proteasome pathway. The chain is UBX domain-containing protein 4 (ubx4) from Schizosaccharomyces pombe (strain 972 / ATCC 24843) (Fission yeast).